Reading from the N-terminus, the 156-residue chain is Small ribosomal subunit protein uS7 (156 aa).

This sequence belongs to the universal ribosomal protein uS7 family. In terms of assembly, part of the 30S ribosomal subunit. Contacts proteins S9 and S11.

Its function is as follows. One of the primary rRNA binding proteins, it binds directly to 16S rRNA where it nucleates assembly of the head domain of the 30S subunit. Is located at the subunit interface close to the decoding center, probably blocks exit of the E-site tRNA. The protein is Small ribosomal subunit protein uS7 of Vibrio vulnificus (strain CMCP6).